Consider the following 463-residue polypeptide: Argininosuccinate lyase (463 aa).

This sequence belongs to the lyase 1 family. Argininosuccinate lyase subfamily.

It localises to the cytoplasm. It carries out the reaction 2-(N(omega)-L-arginino)succinate = fumarate + L-arginine. It participates in amino-acid biosynthesis; L-arginine biosynthesis; L-arginine from L-ornithine and carbamoyl phosphate: step 3/3. The chain is Argininosuccinate lyase from Staphylococcus epidermidis (strain ATCC 35984 / DSM 28319 / BCRC 17069 / CCUG 31568 / BM 3577 / RP62A).